An 801-amino-acid chain; its full sequence is MEASGKLICRQRQVLFSFLLLGLSLAGAAEPRSYSVVEETEGSSFVTNLAKDLGLEQREFSRRGVRVVSRGNKLHLQLNQETGDLLLNEKLDREDLCGHTEPCVLRFQVLLESPFEFFQAELQVIDINDHSPVFLDKQMLVKVSESSPPGTAFPLKNAEDLDVGQNNIENYIISPNSYFRVLTRKRSDGRKYPELVLDKALDREEEAELRLTLTALDGGSPPRSGTAQVYIEVVDVNDNAPEFEQPFYRVQISEDSPISFLVVKVSATDVDTGVNGEISYSLFQASDEISKTFKVDFLTGEIRLKKQLDFEKFQSYEVNIEARDAGGFSGKCTVLIQVIDVNDHAPEVTMSAFTSPIPENAPETVVALFSVSDLDSGENGKISCSIQEDLPFLLKSSVGNFYTLLTETPLDRESRAEYNVTITVTDLGTPGLTTHLNMTVLVSDVNDNAPAFTQASYTLFVRENNSPALHIGSVSATDRDSGTNAQVTYSLLPPQNPHLPLASLVSINTDNGHLFALRSLDYEALQAFEFRVGASDRGSPALSSEALVRVLVLDANDNSPFVLYPLQNSSAPCTELVPRAAEPGYLVTKVVAVDGDSGQNAWLSYQLLKATEPGLFGVWAHNGEVRTARLLSERDAAKQRLVVLVKDNGEPPCSATATLHVLLVDGFSQPYLPLPEAAPAQGQADSLTVYLVVALASVSSLFLFSVLLFVAVRLCRRSRAASVGRCSVPEGPFPGHLVDVRGTGSLSQNYQYEVCLAGGSGTNEFQFLKPVLPNIQGHSFGPEMEQNSNFRNGFGFSLQLK.

Residues 1–29 form the signal peptide; the sequence is MEASGKLICRQRQVLFSFLLLGLSLAGAA. Residues 30–691 are Extracellular-facing; sequence EPRSYSVVEE…GQADSLTVYL (662 aa). Cadherin domains lie at 36 to 134, 139 to 243, 248 to 348, 353 to 452, and 457 to 562; these read VVEE…SPVF, MLVK…APEF, YRVQ…APEV, FTSP…APAF, and YTLF…SPFV. A disulfide bond links Cys97 and Cys103. Residues Asn419 and Asn437 are each glycosylated (N-linked (GlcNAc...) asparagine). A glycan (N-linked (GlcNAc...) asparagine) is linked at Asn568. In terms of domain architecture, Cadherin 6 spans 569-672; that stretch reads SSAPCTELVP…LVDGFSQPYL (104 aa). Residues 692–710 traverse the membrane as a helical segment; sequence VVALASVSSLFLFSVLLFV. Topologically, residues 711–801 are cytoplasmic; sequence AVRLCRRSRA…NGFGFSLQLK (91 aa).

In terms of assembly, forms homodimers in trans (molecules expressed by two different cells). Forms promiscuous heterodimers in cis (at the plasma membrane of the same cell) with other protocadherins.

The protein localises to the cell membrane. Functionally, calcium-dependent cell-adhesion protein involved in cells self-recognition and non-self discrimination. Thereby, it is involved in the establishment and maintenance of specific neuronal connections in the brain. The chain is Protocadherin beta-8 from Pan troglodytes (Chimpanzee).